Reading from the N-terminus, the 147-residue chain is MEQTYVMVKPDGVERGLIGEIVAKIEKKGIKLVAGKLIQIDRKLAEQHYAEHIGKPFFEDLIGFITSGPVFAMVLEGDDVIKIARRMMGKTNPLEADAGTIRAEYAVHTNRNVIHGSDSPESAKREIQLFFEPHEILSYEKAVDIWV.

The ATP site is built by lysine 9, phenylalanine 57, arginine 85, threonine 91, arginine 102, and asparagine 112. Histidine 115 serves as the catalytic Pros-phosphohistidine intermediate.

Belongs to the NDK family. As to quaternary structure, homotetramer. Requires Mg(2+) as cofactor.

The protein localises to the cytoplasm. The catalysed reaction is a 2'-deoxyribonucleoside 5'-diphosphate + ATP = a 2'-deoxyribonucleoside 5'-triphosphate + ADP. It catalyses the reaction a ribonucleoside 5'-diphosphate + ATP = a ribonucleoside 5'-triphosphate + ADP. Its function is as follows. Major role in the synthesis of nucleoside triphosphates other than ATP. The ATP gamma phosphate is transferred to the NDP beta phosphate via a ping-pong mechanism, using a phosphorylated active-site intermediate. This Listeria welshimeri serovar 6b (strain ATCC 35897 / DSM 20650 / CCUG 15529 / CIP 8149 / NCTC 11857 / SLCC 5334 / V8) protein is Nucleoside diphosphate kinase.